Here is a 353-residue protein sequence, read N- to C-terminus: Uroporphyrinogen decarboxylase (353 aa).

Residues 30–34 (RQAGR), D79, Y154, S209, and H332 contribute to the substrate site.

It belongs to the uroporphyrinogen decarboxylase family. As to quaternary structure, homodimer.

The protein resides in the cytoplasm. It catalyses the reaction uroporphyrinogen III + 4 H(+) = coproporphyrinogen III + 4 CO2. It functions in the pathway porphyrin-containing compound metabolism; protoporphyrin-IX biosynthesis; coproporphyrinogen-III from 5-aminolevulinate: step 4/4. Catalyzes the decarboxylation of four acetate groups of uroporphyrinogen-III to yield coproporphyrinogen-III. The sequence is that of Uroporphyrinogen decarboxylase from Mycobacterium ulcerans (strain Agy99).